The primary structure comprises 194 residues: Imidazoleglycerol-phosphate dehydratase (194 aa).

This sequence belongs to the imidazoleglycerol-phosphate dehydratase family.

It localises to the cytoplasm. The catalysed reaction is D-erythro-1-(imidazol-4-yl)glycerol 3-phosphate = 3-(imidazol-4-yl)-2-oxopropyl phosphate + H2O. It functions in the pathway amino-acid biosynthesis; L-histidine biosynthesis; L-histidine from 5-phospho-alpha-D-ribose 1-diphosphate: step 6/9. This is Imidazoleglycerol-phosphate dehydratase from Listeria innocua serovar 6a (strain ATCC BAA-680 / CLIP 11262).